The sequence spans 483 residues: WAS/WASL-interacting protein family member 3 (483 aa).

Pro residues predominate over residues 1-29 (MPVPPPPPPPLPPPPPPLGAPPPPPPSAP). Residues 1–414 (MPVPPPPPPP…GGQLRNGSLH (414 aa)) form a disordered region. 3 consecutive short sequence motifs (profilin-binding motif) follow at residues 3–8 (VPPPPP), 11–16 (LPPPPP), and 20–25 (APPPPP). One can recognise a WH2 domain in the interval 45–62 (GRSALLADIQQGTRLRKV). Position 46 is an asymmetric dimethylarginine (Arg46). The RLRK motif lies at 58–61 (RLRK). Polar residues-rich tracts occupy residues 63-78 (TQINDRSAPQIESSKG) and 87-96 (ANTRGASTPP). Ser149 is subject to Phosphoserine. The segment covering 166 to 192 (PPRPNVPAPPPPTPPPPPPPLPPPLPS) has biased composition (pro residues). Ser202 is subject to Phosphoserine. 2 stretches are compositionally biased toward pro residues: residues 215–239 (VAPPVPCAPPPPPPPPPPTPPPLPP) and 256–271 (HLPPIPPPLPLLPPCG). Over residues 277–288 (AEPASPAQDAQE) the composition is skewed to low complexity. The span at 289-298 (PPAPPPPLPP) shows a compositional bias: pro residues. 2 stretches are compositionally biased toward low complexity: residues 299–308 (YASCSPRASL) and 331–345 (PSFQAPPQKAGAQAL). Ser383 bears the Phosphoserine mark. The span at 393-404 (QQATAWTPTQQP) shows a compositional bias: low complexity. The WASP-binding motif signature appears at 424–448 (TFHSVEDFPPPDEYKPCQKIYPSKI). Residues 461-483 (EAVGQSSDDIKGRNSQLSLKTLR) form a disordered region. Positions 473–483 (RNSQLSLKTLR) are enriched in polar residues.

The protein belongs to the verprolin family. Interacts with WASL, and monomeric and filamentous actin.

It localises to the cytoplasm. Its function is as follows. May be a regulator of cytoskeletal organization. May have a role in spermatogenesis. The polypeptide is WAS/WASL-interacting protein family member 3 (WIPF3) (Homo sapiens (Human)).